The chain runs to 531 residues: Zinc finger protein 692 (531 aa).

A compositionally biased stretch (basic and acidic residues) spans 155 to 178; it reads EAQGLECEQRERTQETRLSRRVDS. Disordered regions lie at residues 155 to 249 and 287 to 307; these read EAQG…PATL and MTES…PTWD. Acidic residues predominate over residues 186 to 206; that stretch reads LGEDQDVEEEEEEEEEEEELL. Phosphoserine is present on S231. Residues 290 to 303 show a composition bias toward polar residues; sequence SLESPGSQAQSAPN. C2H2-type zinc fingers lie at residues 327 to 352, 358 to 382, 388 to 410, 416 to 438, and 447 to 470; these read MPCD…KYQH, FCCP…VKLH, YICE…RRIH, LQCE…RRKH, and FPCE…SKSH. Residue S469 is modified to Phosphoserine. The segment at 474–531 is disordered; sequence LPAQEPPGSLVSSPSISAPESLQSPEGASISTTSDSNPASSTSISSPGVPDPRNREKS. The span at 483–499 shows a compositional bias: polar residues; the sequence is LVSSPSISAPESLQSPE. Residues 502–520 are compositionally biased toward low complexity; it reads SISTTSDSNPASSTSISSP.

Belongs to the krueppel C2H2-type zinc-finger protein family. Phosphorylation at Ser-469 results in loss of DNA-binding activity.

It localises to the nucleus. May act as an transcriptional repressor for PCK1 gene expression, in turn may participate in the hepatic gluconeogenesis regulation through the activated AMPK signaling pathway. This chain is Zinc finger protein 692, found in Mus musculus (Mouse).